Here is a 559-residue protein sequence, read N- to C-terminus: Tissue-type plasminogen activator (559 aa).

An N-terminal signal peptide occupies residues 1-17; that stretch reads MKGELLCVLLLCGVAFT. Residues 18-29 constitute a propeptide that is removed on maturation; that stretch reads LPDQGIHRRFRR. The propeptide at 30–32 is removed by plasmin; the sequence is GAR. Residues 36-78 form the Fibronectin type-I domain; that stretch reads ATCRDEQTQTTYQQHQSWLRPMLRGNRVEYCRCNSGLAQCHSV. Disulfide bonds link Cys38–Cys68, Cys66–Cys75, Cys83–Cys94, Cys88–Cys105, Cys107–Cys116, Cys124–Cys205, Cys145–Cys187, Cys176–Cys200, Cys213–Cys294, Cys234–Cys276, Cys265–Cys289, Cys297–Cys428, Cys340–Cys356, Cys348–Cys417, Cys442–Cys516, Cys474–Cys490, and Cys506–Cys534. Residues 39-49 are important for binding to annexin A2; the sequence is RDEQTQTTYQQ. The 39-residue stretch at 79–117 folds into the EGF-like domain; that stretch reads PVRSCSEPRCFNGGTCQQALYFSDFVCQCPDGFVGKRCD. Kringle domains follow at residues 124–205 and 213–294; these read CFEG…TPAC and CYVG…MSPC. Asn149 carries an N-linked (GlcNAc...) asparagine glycan. Residues 309–558 form the Peptidase S1 domain; the sequence is IKGGLFTDIT…YLNWIQDNMK (250 aa). Active-site charge relay system residues include His355 and Asp404. Asn481 is a glycosylation site (N-linked (GlcNAc...) asparagine). The active-site Charge relay system is Ser510.

It belongs to the peptidase S1 family. As to quaternary structure, heterodimer of chain A and chain B held by a disulfide bond. Binds to fibrin with high affinity. This interaction leads to an increase in the catalytic efficiency of the enzyme due to an increase in affinity for plasminogen. Similarly, binding to heparin increases the activation of plasminogen. Binds to annexin A2, cytokeratin-8, fibronectin and laminin. Binds to mannose receptor and the low-density lipoprotein receptor-related protein (LRP1); these proteins are involved in TPA clearance. Binds LRP1B; binding is followed by internalization and degradation. Forms heterodimer with SERPINA5. Interacts with SERPINE1. In complex with SERPINE1, interacts with SORL1. The single chain, almost fully active enzyme, can be further processed into a two-chain fully active form by a cleavage after Arg-308 catalyzed by plasmin, tissue kallikrein or factor Xa.

It localises to the secreted. Its subcellular location is the extracellular space. The catalysed reaction is Specific cleavage of Arg-|-Val bond in plasminogen to form plasmin.. Inhibited by SERPINA5. Inhibited by SERPINE1. In terms of biological role, converts the abundant, but inactive, zymogen plasminogen to plasmin by hydrolyzing a single Arg-Val bond in plasminogen. By controlling plasmin-mediated proteolysis, it plays an important role in tissue remodeling and degradation, in cell migration and many other physiopathological events. During oocyte activation, plays a role in cortical granule reaction in the zona reaction, which contributes to the block to polyspermy. This is Tissue-type plasminogen activator (Plat) from Rattus norvegicus (Rat).